A 455-amino-acid polypeptide reads, in one-letter code: Probable Xaa-Pro aminopeptidase GSTUM_00008071001 (455 aa).

The Mn(2+) site is built by aspartate 251, aspartate 262, glutamate 386, and glutamate 426.

This sequence belongs to the peptidase M24B family. It depends on Mn(2+) as a cofactor.

It carries out the reaction Release of any N-terminal amino acid, including proline, that is linked to proline, even from a dipeptide or tripeptide.. Catalyzes the removal of a penultimate prolyl residue from the N-termini of peptides. This is Probable Xaa-Pro aminopeptidase GSTUM_00008071001 from Tuber melanosporum (strain Mel28) (Perigord black truffle).